The primary structure comprises 938 residues: LPS-assembly protein LptD (938 aa).

A signal peptide spans 1–33; that stretch reads MAVKHPAFRKKFPLLVTGSLLALQPAFSLQSFA. Residues 52–96 form a disordered region; it reads KTATSALPPRPQHSRSAVSTTSGSATATATKQEPAPVLVTESKGR. Residues 65 to 81 show a composition bias toward low complexity; that stretch reads SRSAVSTTSGSATATAT.

It belongs to the LptD family. In terms of assembly, component of the lipopolysaccharide transport and assembly complex. Interacts with LptE and LptA.

The protein localises to the cell outer membrane. Its function is as follows. Together with LptE, is involved in the assembly of lipopolysaccharide (LPS) at the surface of the outer membrane. This chain is LPS-assembly protein LptD, found in Ectopseudomonas mendocina (strain ymp) (Pseudomonas mendocina).